The chain runs to 229 residues: MQKKKAFNPLLYLTSIVFLSWSISFSFKKSMESLVIHWWNAEQSEVFLNDIQEKSALEKFIELEELLFLDEMIKESPDIHIQKLRIGIHKETIQLVKMYNEGHIHTILNFLTNIISFAILSVFYILGNEQLVILNSWVREFIYNLSDTIKAFCILLLTDLCIGFHSPHGWELMIGSVYKDFGFSHNNQIISGLVSTFPVILDTIFKYLIFRYLNRVSPSLVVIYHSIND.

4 consecutive transmembrane segments (helical) span residues 7-27 (FNPLLYLTSIVFLSWSISFSF), 107-127 (ILNFLTNIISFAILSVFYILG), 154-174 (ILLLTDLCIGFHSPHGWELMI), and 189-209 (IISGLVSTFPVILDTIFKYLI).

Belongs to the CemA family.

Its subcellular location is the plastid. It is found in the chloroplast inner membrane. The enzyme catalyses K(+)(in) + H(+)(out) = K(+)(out) + H(+)(in). In terms of biological role, contributes to K(+)/H(+) antiport activity by supporting proton efflux to control proton extrusion and homeostasis in chloroplasts in a light-dependent manner to modulate photosynthesis. Prevents excessive induction of non-photochemical quenching (NPQ) under continuous-light conditions. Indirectly promotes efficient inorganic carbon uptake into chloroplasts. This chain is Potassium/proton antiporter CemA, found in Ranunculus macranthus (Large buttercup).